Reading from the N-terminus, the 279-residue chain is 4-diphosphocytidyl-2-C-methyl-D-erythritol kinase (279 aa).

Lys-11 is a catalytic residue. 95-105 serves as a coordination point for ATP; that stretch reads PVAAGLGGGSS. Asp-137 is a catalytic residue.

It belongs to the GHMP kinase family. IspE subfamily.

It carries out the reaction 4-CDP-2-C-methyl-D-erythritol + ATP = 4-CDP-2-C-methyl-D-erythritol 2-phosphate + ADP + H(+). Its pathway is isoprenoid biosynthesis; isopentenyl diphosphate biosynthesis via DXP pathway; isopentenyl diphosphate from 1-deoxy-D-xylulose 5-phosphate: step 3/6. Catalyzes the phosphorylation of the position 2 hydroxy group of 4-diphosphocytidyl-2C-methyl-D-erythritol. The chain is 4-diphosphocytidyl-2-C-methyl-D-erythritol kinase from Geobacter sulfurreducens (strain ATCC 51573 / DSM 12127 / PCA).